The following is a 141-amino-acid chain: NADH dehydrogenase [ubiquinone] 1 alpha subcomplex subunit 11 (141 aa).

2 helical membrane passes run 21 to 43 and 58 to 80; these read KTYI…RVSL and RYTF…SAQV.

It belongs to the complex I NDUFA11 subunit family. In terms of assembly, complex I is composed of 45 different subunits.

Its subcellular location is the mitochondrion inner membrane. Functionally, accessory subunit of the mitochondrial membrane respiratory chain NADH dehydrogenase (Complex I), that is believed not to be involved in catalysis. Complex I functions in the transfer of electrons from NADH to the respiratory chain. The immediate electron acceptor for the enzyme is believed to be ubiquinone. The polypeptide is NADH dehydrogenase [ubiquinone] 1 alpha subcomplex subunit 11 (Ndufa11) (Mus musculus (Mouse)).